Here is a 589-residue protein sequence, read N- to C-terminus: Protein PAF1 homolog (589 aa).

Residues 1 to 54 (MASYRPPYPPLPQPPSQNSLAPPPPPPSLPPPVPPPPPSHQPYSYPPPPPPPPH) are compositionally biased toward pro residues. 2 disordered regions span residues 1-180 (MASY…PLLT) and 542-589 (GVYS…DYSE). Positions 55-65 (AYYQQGPHYPQ) are enriched in low complexity. The span at 71 to 87 (APPPPPPPSAPPPLVPD) shows a compositional bias: pro residues. Positions 88–116 (PPRHQGPNDHEKGASKQVGRRERAKPDPS) are enriched in basic and acidic residues. The segment covering 117–127 (KHHHRSHLPHS) has biased composition (basic residues). The stretch at 126-159 (HSKKIETEEERRLRKKRELEKQRQDEKHRQQMKN) forms a coiled coil. Positions 128 to 154 (KKIETEEERRLRKKRELEKQRQDEKHR) are enriched in basic and acidic residues.

The protein belongs to the PAF1 family. In terms of assembly, component of the nuclear PAF1 complex (PAF1C), which consists of VIP2/ELF7/PAF1, VIP3/SKI8/WDR61, VIP4/LEO1, VIP5/RTF1, VIP6/ELF8/CTR9 and CDC73. Expressed in roots, leaves and shoot apex.

Its subcellular location is the nucleus. Component of the PAF1 complex (PAF1C) which is involved in histone modifications such as methylation on histone H3 'Lys-4' (H3K4me3). Involved in regulation of flowering time. Required for the expression of the flowering repressors and MAD-box genes FLC, AGL27/FLM and AGL31/MAF2. Required for histone H3 trimethylation on 'Lys-4' H3K4me3 at the FLC and AGL27/FLM loci. Involved in the control of seed dormancy and germination. In Arabidopsis thaliana (Mouse-ear cress), this protein is Protein PAF1 homolog.